A 371-amino-acid polypeptide reads, in one-letter code: MRVTMRRVLLAVGSVVALMVTLHLGQQVLECQHVLSKRRHRLMRPENEELVMVDSNHVEYRYSKEMPLIFIGGVPRSGTTLMRAMLDAHPEVRCGEETRIIPRVLAMRQAWSKSGREKMRLDEAGVTDQVLDAAMQAFILEVIAKHGEPARYLCNKDPFTLKSSVYLSRLFPNSKFLLMVRDGRASVHSMITRKVTIAGFDLNCYRDCLTKWNKAIEVMYSQCLEIGRSRCLPVYYEQLVLHPEQSMHAIMKFLGISWSDTVLHHEELIGKPGGVSLSKIERSTDQVIKPVNMEALSKWIGHIPGDVLQDMAHIAPMLARLGYDPYANPPNYGHPDPLVVNNTHRVLKGDYKTPANLKGHLQVTQNTSSSH.

Residues 1-8 (MRVTMRRV) are Cytoplasmic-facing. The chain crosses the membrane as a helical; Signal-anchor for type II membrane protein span at residues 9 to 25 (LLAVGSVVALMVTLHLG). Residues 26–371 (QQVLECQHVL…QVTQNTSSSH (346 aa)) are Lumenal-facing. 76–80 (RSGTT) is a binding site for 3'-phosphoadenylyl sulfate. A disulfide bond links C94 and C154. E97 functions as the Proton donor/acceptor in the catalytic mechanism. The interaction with peptide substrate stretch occupies residues 99–103 (RIIPR). 3'-phosphoadenylyl sulfate contacts are provided by R181, S189, and R193. C223 and C231 are disulfide-bonded. Residues Y236, 283–292 (STDQVIKPVN), and K298 contribute to the 3'-phosphoadenylyl sulfate site. 2 N-linked (GlcNAc...) asparagine glycosylation sites follow: N341 and N366.

This sequence belongs to the protein sulfotransferase family.

The protein resides in the golgi apparatus membrane. The catalysed reaction is L-tyrosyl-[protein] + 3'-phosphoadenylyl sulfate = O-sulfo-L-tyrosine-[protein] + adenosine 3',5'-bisphosphate + H(+). Functionally, catalyzes the O-sulfation of tyrosine residues within acidic motifs of polypeptides, using 3'-phosphoadenylyl sulfate (PAPS) as cosubstrate. This Gallus gallus (Chicken) protein is Protein-tyrosine sulfotransferase 2 (TPST2).